A 279-amino-acid polypeptide reads, in one-letter code: Glutamate racemase (279 aa).

Substrate-binding positions include 13 to 14 (DS) and 45 to 46 (YG). The active-site Proton donor/acceptor is cysteine 76. 77 to 78 (NT) contacts substrate. The active-site Proton donor/acceptor is cysteine 185. 186-187 (TH) serves as a coordination point for substrate.

It belongs to the aspartate/glutamate racemases family.

It carries out the reaction L-glutamate = D-glutamate. It functions in the pathway cell wall biogenesis; peptidoglycan biosynthesis. In terms of biological role, provides the (R)-glutamate required for cell wall biosynthesis. In Picosynechococcus sp. (strain ATCC 27264 / PCC 7002 / PR-6) (Agmenellum quadruplicatum), this protein is Glutamate racemase.